Consider the following 356-residue polypeptide: Phenylalanine dehydrogenase (356 aa).

Arginine 43 lines the NAD(+) pocket. An L-phenylalanine-binding site is contributed by lysine 67. The Proton donor/acceptor role is filled by lysine 79. 118–119 (PD) lines the L-phenylalanine pocket. NAD(+) contacts are provided by residues aspartate 119, serine 150, threonine 154, 183-189 (GLGAVGG), 206-207 (DT), arginine 211, 240-241 (AM), and 261-263 (AAN). Residue asparagine 263 participates in L-phenylalanine binding.

This sequence belongs to the Glu/Leu/Phe/Val dehydrogenases family. As to quaternary structure, homotetramer, dimer of dimers.

The enzyme catalyses L-phenylalanine + NAD(+) + H2O = 3-phenylpyruvate + NH4(+) + NADH + H(+). It functions in the pathway amino-acid biosynthesis; L-phenylalanine biosynthesis; L-phenylalanine from phenylpyruvate (PDH route): step 1/1. With respect to regulation, subject to competitive inhibition by 3-phenylpropionate for the conversion of L-phenylalanine to phenylpyruvate. Subject to competitive inhibition by D-phenylalanine for the conversion of phenylpyruvate to L-phenylalanine. In terms of biological role, catalyzes the reversible NAD(+)-dependent oxidative deamination of L-phenylalanine to phenylpyruvate. This is Phenylalanine dehydrogenase from Rhodococcus sp.